Consider the following 465-residue polypeptide: MAMTGSTPCSSMSNHTKERVTMTKVTLENFYSNLIAQHEEREMRQKKLEKVMEEEGLKDEEKRLRRSAHARKETEFLRLKRTRLGLEDFESLKVIGRGAFGEVRLVQKKDTGHVYAMKILRKADMLEKEQVGHIRAERDILVEADSLWVVKMFYSFQDKLNLYLIMEFLPGGDMMTLLMKKDTLTEEETQFYIAETVLAIDSIHQLGFIHRDIKPDNLLLDSKGHVKLSDFGLCTGLKKAHRTEFYRNLNHSLPSDFTFQNMNSKRKAETWKRNRRQLAFSTVGTPDYIAPEVFMQTGYNKLCDWWSLGVIMYEMLIGYPPFCSETPQETYKKVMNWKETLTFPPEVPISEKAKDLILRFCCEWEHRIGAPGVEEIKSNSFFEGVDWEHIRERPAAISIEIKSIDDTSNFDEFPESDILKPTVATSNHPETDYKNKDWVFINYTYKRFEGLTARGAIPSYMKAAK.

At A2 the chain carries N-acetylalanine. The interaction with S100B stretch occupies residues K62–E87. A Phosphothreonine modification is found at T74. One can recognise a Protein kinase domain in the interval F89–F382. Residues I95–V103 and K118 each bind ATP. The Proton acceptor role is filled by D212. S264 bears the Phosphoserine mark. The residue at position 281 (S281) is a Phosphoserine; by autocatalysis. A UFM1-interacting motif (UFIM) motif is present at residues W306–I311. One can recognise an AGC-kinase C-terminal domain in the interval E383 to G455. T444 bears the Phosphothreonine; by STK24/MST3 mark.

The protein belongs to the protein kinase superfamily. AGC Ser/Thr protein kinase family. In terms of assembly, homodimeric S100B binds two molecules of STK38. Interacts with MOB1 and MOB2. Interacts with MAP3K1 and MAP3K2 (via the kinase catalytic domain). Forms a tripartite complex with MOBKL1B and STK3/MST2. Interacts with MICAL1; leading to inhibit the protein kinase activity by antagonizing activation by MST1/STK4. It depends on Mg(2+) as a cofactor. ISGylated. Post-translationally, phosphorylated by STK3/MST2 and this is enhanced by MOBKL1B. Ubiquitously expressed with highest levels observed in peripheral blood leukocytes.

The protein localises to the nucleus. The protein resides in the cytoplasm. It is found in the chromosome. The catalysed reaction is L-seryl-[protein] + ATP = O-phospho-L-seryl-[protein] + ADP + H(+). It catalyses the reaction L-threonyl-[protein] + ATP = O-phospho-L-threonyl-[protein] + ADP + H(+). Activated by binding of S100B which releases autoinhibitory N-lobe interactions, enabling ATP to bind and the autophosphorylation of Ser-281. Thr-444 then undergoes calcium-dependent phosphorylation by STK24/MST3. Interactions between phosphorylated Thr-444 and the N-lobe promote additional structural changes that complete the activation of the kinase. Autoinhibition is also released by the binding of MOB1/MOBKL1A and MOB2/HCCA2 to the N-terminal of STK38. Serine/threonine-protein kinase that acts as a negative regulator of MAP3K1/2 signaling. Converts MAP3K2 from its phosphorylated form to its non-phosphorylated form and inhibits autophosphorylation of MAP3K2. Acts as an ufmylation 'reader' in a kinase-independent manner: specifically recognizes and binds mono-ufmylated histone H4 in response to DNA damage, promoting the recruitment of SUV39H1 to the double-strand breaks, resulting in ATM activation. The chain is Serine/threonine-protein kinase 38 from Homo sapiens (Human).